A 285-amino-acid polypeptide reads, in one-letter code: Diaminopimelate epimerase (285 aa).

2 residues coordinate substrate: asparagine 14 and asparagine 67. Residue cysteine 76 is the Proton donor of the active site. Residues glycine 77–asparagine 78, asparagine 166, asparagine 199, and glutamate 217–arginine 218 contribute to the substrate site. Cysteine 226 (proton acceptor) is an active-site residue. Glycine 227–threonine 228 is a binding site for substrate.

It belongs to the diaminopimelate epimerase family. As to quaternary structure, homodimer.

The protein resides in the cytoplasm. It catalyses the reaction (2S,6S)-2,6-diaminopimelate = meso-2,6-diaminopimelate. The protein operates within amino-acid biosynthesis; L-lysine biosynthesis via DAP pathway; DL-2,6-diaminopimelate from LL-2,6-diaminopimelate: step 1/1. Its function is as follows. Catalyzes the stereoinversion of LL-2,6-diaminopimelate (L,L-DAP) to meso-diaminopimelate (meso-DAP), a precursor of L-lysine and an essential component of the bacterial peptidoglycan. The polypeptide is Diaminopimelate epimerase (Bacillus licheniformis (strain ATCC 14580 / DSM 13 / JCM 2505 / CCUG 7422 / NBRC 12200 / NCIMB 9375 / NCTC 10341 / NRRL NRS-1264 / Gibson 46)).